Reading from the N-terminus, the 663-residue chain is Translation factor GUF1 homolog, mitochondrial (663 aa).

The transit peptide at 1 to 33 directs the protein to the mitochondrion; it reads MAGAAALRRSARRVVLPGAYALSRALQHPERLL. Residues 55-247 form the tr-type G domain; sequence ERVRNFSIIA…AVIERIPSPP (193 aa). GTP-binding positions include 64-71, 140-144, and 194-197; these read AHVDHGKS, DTPGH, and NKID.

This sequence belongs to the TRAFAC class translation factor GTPase superfamily. Classic translation factor GTPase family. LepA subfamily.

It is found in the mitochondrion inner membrane. It carries out the reaction GTP + H2O = GDP + phosphate + H(+). Promotes mitochondrial protein synthesis. May act as a fidelity factor of the translation reaction, by catalyzing a one-codon backward translocation of tRNAs on improperly translocated ribosomes. Binds to mitochondrial ribosomes in a GTP-dependent manner. The chain is Translation factor GUF1 homolog, mitochondrial from Oryza sativa subsp. japonica (Rice).